Consider the following 209-residue polypeptide: Large ribosomal subunit protein uL3 (209 aa).

Residues 133-153 (THGNSLSHRAPGSIGQNQTPG) form a disordered region. The residue at position 150 (Gln-150) is an N5-methylglutamine.

This sequence belongs to the universal ribosomal protein uL3 family. As to quaternary structure, part of the 50S ribosomal subunit. Forms a cluster with proteins L14 and L19. Methylated by PrmB.

In terms of biological role, one of the primary rRNA binding proteins, it binds directly near the 3'-end of the 23S rRNA, where it nucleates assembly of the 50S subunit. The sequence is that of Large ribosomal subunit protein uL3 from Pectobacterium atrosepticum (strain SCRI 1043 / ATCC BAA-672) (Erwinia carotovora subsp. atroseptica).